Here is a 397-residue protein sequence, read N- to C-terminus: Argininosuccinate synthase (397 aa).

An ATP-binding site is contributed by Ala-9–Ser-17. Tyr-86 provides a ligand contact to L-citrulline. Residue Gly-116 coordinates ATP. 3 residues coordinate L-aspartate: Thr-118, Asn-122, and Asp-123. L-citrulline is bound at residue Asn-122. L-citrulline-binding residues include Arg-126, Ser-174, Glu-259, and Tyr-271.

It belongs to the argininosuccinate synthase family. Type 1 subfamily. Homotetramer.

Its subcellular location is the cytoplasm. The enzyme catalyses L-citrulline + L-aspartate + ATP = 2-(N(omega)-L-arginino)succinate + AMP + diphosphate + H(+). It participates in amino-acid biosynthesis; L-arginine biosynthesis; L-arginine from L-ornithine and carbamoyl phosphate: step 2/3. The protein is Argininosuccinate synthase of Lactococcus lactis subsp. cremoris (strain MG1363).